Reading from the N-terminus, the 242-residue chain is Cell division protein FtsQ (242 aa).

Over 1-12 (MWDNAEAMERLT) the chain is Cytoplasmic. The chain crosses the membrane as a helical span at residues 13–32 (RWLLVMMAMLLAASGLVWFY). At 33-242 (NSNHLPVKQV…DGLPEKESEE (210 aa)) the chain is on the periplasmic side. A POTRA domain is found at 37–106 (LPVKQVSLKG…DTVEVVLTER (70 aa)).

This sequence belongs to the FtsQ/DivIB family. FtsQ subfamily. Part of a complex composed of FtsB, FtsL and FtsQ.

Its subcellular location is the cell inner membrane. Essential cell division protein. May link together the upstream cell division proteins, which are predominantly cytoplasmic, with the downstream cell division proteins, which are predominantly periplasmic. May control correct divisome assembly. The sequence is that of Cell division protein FtsQ from Neisseria gonorrhoeae (strain ATCC 700825 / FA 1090).